The following is a 165-amino-acid chain: Methylated-DNA--protein-cysteine methyltransferase (165 aa).

Residue Cys-126 is the Nucleophile; methyl group acceptor of the active site.

Belongs to the MGMT family.

It localises to the cytoplasm. The catalysed reaction is a 6-O-methyl-2'-deoxyguanosine in DNA + L-cysteinyl-[protein] = S-methyl-L-cysteinyl-[protein] + a 2'-deoxyguanosine in DNA. It catalyses the reaction a 4-O-methyl-thymidine in DNA + L-cysteinyl-[protein] = a thymidine in DNA + S-methyl-L-cysteinyl-[protein]. Its function is as follows. Involved in the cellular defense against the biological effects of O6-methylguanine (O6-MeG) and O4-methylthymine (O4-MeT) in DNA. Repairs the methylated nucleobase in DNA by stoichiometrically transferring the methyl group to a cysteine residue in the enzyme. This is a suicide reaction: the enzyme is irreversibly inactivated. This chain is Methylated-DNA--protein-cysteine methyltransferase, found in Mycobacterium bovis (strain ATCC BAA-935 / AF2122/97).